Here is a 323-residue protein sequence, read N- to C-terminus: 4-hydroxy-3-methylbut-2-enyl diphosphate reductase (323 aa).

[4Fe-4S] cluster is bound at residue cysteine 12. (2E)-4-hydroxy-3-methylbut-2-enyl diphosphate-binding residues include histidine 43 and histidine 81. Residues histidine 43 and histidine 81 each coordinate dimethylallyl diphosphate. Positions 43 and 81 each coordinate isopentenyl diphosphate. Cysteine 103 lines the [4Fe-4S] cluster pocket. Histidine 131 contributes to the (2E)-4-hydroxy-3-methylbut-2-enyl diphosphate binding site. Dimethylallyl diphosphate is bound at residue histidine 131. Histidine 131 is a binding site for isopentenyl diphosphate. Residue glutamate 133 is the Proton donor of the active site. Threonine 170 contributes to the (2E)-4-hydroxy-3-methylbut-2-enyl diphosphate binding site. Cysteine 198 lines the [4Fe-4S] cluster pocket. 3 residues coordinate (2E)-4-hydroxy-3-methylbut-2-enyl diphosphate: serine 226, asparagine 228, and serine 271. Serine 226, asparagine 228, and serine 271 together coordinate dimethylallyl diphosphate. Serine 226, asparagine 228, and serine 271 together coordinate isopentenyl diphosphate.

The protein belongs to the IspH family. Requires [4Fe-4S] cluster as cofactor.

The enzyme catalyses isopentenyl diphosphate + 2 oxidized [2Fe-2S]-[ferredoxin] + H2O = (2E)-4-hydroxy-3-methylbut-2-enyl diphosphate + 2 reduced [2Fe-2S]-[ferredoxin] + 2 H(+). It carries out the reaction dimethylallyl diphosphate + 2 oxidized [2Fe-2S]-[ferredoxin] + H2O = (2E)-4-hydroxy-3-methylbut-2-enyl diphosphate + 2 reduced [2Fe-2S]-[ferredoxin] + 2 H(+). Its pathway is isoprenoid biosynthesis; dimethylallyl diphosphate biosynthesis; dimethylallyl diphosphate from (2E)-4-hydroxy-3-methylbutenyl diphosphate: step 1/1. The protein operates within isoprenoid biosynthesis; isopentenyl diphosphate biosynthesis via DXP pathway; isopentenyl diphosphate from 1-deoxy-D-xylulose 5-phosphate: step 6/6. Its function is as follows. Catalyzes the conversion of 1-hydroxy-2-methyl-2-(E)-butenyl 4-diphosphate (HMBPP) into a mixture of isopentenyl diphosphate (IPP) and dimethylallyl diphosphate (DMAPP). Acts in the terminal step of the DOXP/MEP pathway for isoprenoid precursor biosynthesis. The chain is 4-hydroxy-3-methylbut-2-enyl diphosphate reductase from Lysinibacillus sphaericus (strain C3-41).